A 204-amino-acid polypeptide reads, in one-letter code: N-(5'-phosphoribosyl)anthranilate isomerase (204 aa).

It belongs to the TrpF family.

It carries out the reaction N-(5-phospho-beta-D-ribosyl)anthranilate = 1-(2-carboxyphenylamino)-1-deoxy-D-ribulose 5-phosphate. It functions in the pathway amino-acid biosynthesis; L-tryptophan biosynthesis; L-tryptophan from chorismate: step 3/5. In Bacillus cereus (strain AH187), this protein is N-(5'-phosphoribosyl)anthranilate isomerase.